The primary structure comprises 704 residues: MAVPTTAVEGVRSRGAPGEVIHLNVGGKRFSTSRQTLTWIPDSFFSSLLSGRISTLKDETGAIFIDRDPTVFAPILNFLRTKELDPRGVHGSSLLHEAQFYGLTPLVRRLQVREELDRSSCGNVLFNGYLPPPVFPVKRRNRHSLVGPQQIGGRPAPVRRSNTMPPNLGNAGLLGRMLDDRAPPSPSGQPEEPGMVRLVCGHHNWIAVAYTHFLVCYRLKEASGWQLAFSSPRLDWPIERLALTARVLGGAPGEHDKMVAAATGSEILLWALQAQGGGSEIGVFHLGVPVEALFFVGNQLIATSHTGRIGVWNAVTKHWQVQEVQPITSYDAAGSFLLLGCSNGSIYYVDVQKFPLRMKDNDLLVSELYRDPAEDGVTALSVYLTPKTSDSGNWIEIAYGTSSGVVRVIVQHPETVGSGPQLFQTFSVHRSPVTKIMLSEKHLISVCADNNHVRTWSVTRFRGMISTQPGSTPLASFKILALESADGLGGCSAGNDIGPYGERDDQQVFIQKVVPNASQLFVRLSSTGQRVCSVRSVDGSATTAFTVLECEGSRRLGSRPRRYLLTGQANGSLAMWDLTTAMDGLGQTPAGGLTEEELMDQLEQCELSPLTSSRASFPSPSPRTSLTSLHSASSNTSLCGHRGSPSPPQAGARSRGAGSFVDRFKELARGAPELRGPPTPAPRPSTSLGNPLILPKNTLNETSF.

Ala-2 bears the N-acetylalanine mark. Positions 19–88 (EVIHLNVGGK…LRTKELDPRG (70 aa)) constitute a BTB domain. A disordered region spans residues 146-165 (VGPQQIGGRPAPVRRSNTMP). The residue at position 163 (Thr-163) is a Phosphothreonine. WD repeat units follow at residues 233–280 (RLDW…GGSE), 283–322 (VFHL…WQVQ), 324–359 (VQPI…LRMK), 428–466 (VHRS…GMIS), and 548–586 (LECE…DGLG). A disordered region spans residues 609–704 (PLTSSRASFP…PKNTLNETSF (96 aa)). The segment covering 611 to 631 (TSSRASFPSPSPRTSLTSLHS) has biased composition (low complexity). The PXXXPR signature appears at 618 to 623 (PSPSPR). Ser-644 and Ser-646 each carry phosphoserine. The short motif at 678 to 683 (PTPAPR) is the PXXXPR element.

This sequence belongs to the KCTD3 family. In terms of assembly, monomer. Interacts with CUL3; interaction is direct and forms a 5:5 heterodecamer. Interacts (via PXXXPR motifs) with SH3KBP1 (via SH3 domains). Directly interacts with cathepsin B/CTSB.

It localises to the lysosome. Functionally, inhibits CBL-SH3KBP1 complex mediated down-regulation of EGFR signaling by sequestration of SH3KBP1. Binds to SH3KBP1 and prevents its interaction with CBL and inhibits translocation of SH3KBP1 to EGFR containing vesicles upon EGF stimulation. This is SH3KBP1-binding protein 1 (Shkbp1) from Rattus norvegicus (Rat).